A 409-amino-acid polypeptide reads, in one-letter code: Glycogenin (409 aa).

UDP is bound by residues L8, Y14, and R80. Residues L8, Y14, R80, K89, D105, D107, N140, S141, D169, D172, and Q173 each coordinate UDP-alpha-D-glucose. Residues D105 and D107 each coordinate UDP. Mn(2+)-binding residues include D105 and D107. The O-linked (Glc...) tyrosine glycan is linked to Y212. UDP is bound by residues H229, G232, and K235. H229 lines the Mn(2+) pocket. UDP-alpha-D-glucose-binding residues include G232 and K235. The segment at 283–303 (RIEEDSHETEEKVDEEVSISE) is disordered.

It belongs to the glycosyltransferase 8 family. Glycogenin subfamily. Mn(2+) serves as cofactor.

The protein resides in the cytoplasm. The protein localises to the vacuole. The enzyme catalyses L-tyrosyl-[glycogenin] + UDP-alpha-D-glucose = alpha-D-glucosyl-L-tyrosyl-[glycogenin] + UDP + H(+). The catalysed reaction is [1,4-alpha-D-glucosyl](n)-L-tyrosyl-[glycogenin] + UDP-alpha-D-glucose = [1,4-alpha-D-glucosyl](n+1)-L-tyrosyl-[glycogenin] + UDP + H(+). Its function is as follows. Glycogenin participates in the glycogen biosynthetic process along with glycogen synthase and glycogen branching enzyme. It catalyzes the formation of a short alpha (1,4)-glucosyl chain covalently attached via a glucose 1-O-tyrosyl linkage to internal tyrosine residues and these chains act as primers for the elongation reaction catalyzed by glycogen synthase. The protein is Glycogenin of Komagataella phaffii (strain GS115 / ATCC 20864) (Yeast).